Here is a 252-residue protein sequence, read N- to C-terminus: Ribosomal RNA small subunit methyltransferase J (252 aa).

S-adenosyl-L-methionine contacts are provided by residues 101 to 102 (RD), 117 to 118 (ER), 153 to 154 (SS), and Asp171.

Belongs to the methyltransferase superfamily. RsmJ family.

Its subcellular location is the cytoplasm. The catalysed reaction is guanosine(1516) in 16S rRNA + S-adenosyl-L-methionine = N(2)-methylguanosine(1516) in 16S rRNA + S-adenosyl-L-homocysteine + H(+). Functionally, specifically methylates the guanosine in position 1516 of 16S rRNA. This chain is Ribosomal RNA small subunit methyltransferase J, found in Salmonella typhimurium (strain LT2 / SGSC1412 / ATCC 700720).